The following is a 38-amino-acid chain: Potassium channel toxin alpha-KTx 2.15 (38 aa).

Disulfide bonds link Cys-7-Cys-29, Cys-13-Cys-34, and Cys-17-Cys-36.

The protein belongs to the short scorpion toxin superfamily. Potassium channel inhibitor family. Alpha-KTx 02 subfamily. In terms of tissue distribution, expressed by the venom gland.

Its subcellular location is the secreted. Functionally, blocks human voltage-gated potassium channels Kv1.2/KCNA2 (IC(50)=0.3 nM), Kv1.3/KCNA3 (IC(50)=8.3 nM) and Shaker IR (with inactivation domain removed) (IC(50)=12 nM) and blocks intermediate conductance calcium-activated potassium channel KCa3.1/KCNN4 (IC(50)=6.4 nM). The polypeptide is Potassium channel toxin alpha-KTx 2.15 (Centruroides tecomanus (Scorpion)).